We begin with the raw amino-acid sequence, 68 residues long: Large ribosomal subunit protein eL24 (68 aa).

Zn(2+)-binding residues include Cys-7, Cys-10, Cys-33, and Cys-37. The C4-type zinc-finger motif lies at 7 to 37; sequence CSYCGREFEPGTGKMFVRNDGRVLFFCSSKC.

This sequence belongs to the eukaryotic ribosomal protein eL24 family. In terms of assembly, part of the 50S ribosomal subunit. Forms a cluster with proteins L3 and L14. Zn(2+) is required as a cofactor.

Its function is as follows. Binds to the 23S rRNA. In Thermococcus onnurineus (strain NA1), this protein is Large ribosomal subunit protein eL24.